Reading from the N-terminus, the 654-residue chain is Arrestin domain-containing protein C (654 aa).

The C2 domain maps to 1–105 (MTQRSLKINI…AKRNLMDQWL (105 aa)). The stretch at 616-647 (AKRIFLKIQQIQSERQKQQEQQEQQVVSNLEA) forms a coiled coil.

Belongs to the arrestin family.

This is Arrestin domain-containing protein C (adcC) from Dictyostelium discoideum (Social amoeba).